Reading from the N-terminus, the 324-residue chain is Ribosomal RNA small subunit methyltransferase H (324 aa).

S-adenosyl-L-methionine is bound by residues 41 to 43 (GGH), Asp60, Tyr87, Asp111, and Gln118.

The protein belongs to the methyltransferase superfamily. RsmH family.

The protein localises to the cytoplasm. The catalysed reaction is cytidine(1402) in 16S rRNA + S-adenosyl-L-methionine = N(4)-methylcytidine(1402) in 16S rRNA + S-adenosyl-L-homocysteine + H(+). Its function is as follows. Specifically methylates the N4 position of cytidine in position 1402 (C1402) of 16S rRNA. This chain is Ribosomal RNA small subunit methyltransferase H, found in Nocardia farcinica (strain IFM 10152).